Reading from the N-terminus, the 629-residue chain is Phosphomethylpyrimidine synthase (629 aa).

Residues 1–30 (MTTKLKNASNLSESAQVDQQSVQPFTRSQK) are disordered. Residues Asn233, Met262, Tyr291, His327, 347-349 (SRG), 388-391 (DGLR), and Glu427 contribute to the substrate site. His431 provides a ligand contact to Zn(2+). Tyr454 is a binding site for substrate. Position 495 (His495) interacts with Zn(2+). 3 residues coordinate [4Fe-4S] cluster: Cys575, Cys578, and Cys583.

It belongs to the ThiC family. Homodimer. Requires [4Fe-4S] cluster as cofactor.

It catalyses the reaction 5-amino-1-(5-phospho-beta-D-ribosyl)imidazole + S-adenosyl-L-methionine = 4-amino-2-methyl-5-(phosphooxymethyl)pyrimidine + CO + 5'-deoxyadenosine + formate + L-methionine + 3 H(+). It functions in the pathway cofactor biosynthesis; thiamine diphosphate biosynthesis. In terms of biological role, catalyzes the synthesis of the hydroxymethylpyrimidine phosphate (HMP-P) moiety of thiamine from aminoimidazole ribotide (AIR) in a radical S-adenosyl-L-methionine (SAM)-dependent reaction. The chain is Phosphomethylpyrimidine synthase from Pseudomonas fluorescens (strain ATCC BAA-477 / NRRL B-23932 / Pf-5).